A 267-amino-acid chain; its full sequence is Glutamate racemase (267 aa).

Substrate is bound by residues 13 to 14 (DS) and 45 to 46 (YS). Cys77 functions as the Proton donor/acceptor in the catalytic mechanism. Residue 78 to 79 (NT) participates in substrate binding. Cys188 functions as the Proton donor/acceptor in the catalytic mechanism. Residue 189-190 (TH) participates in substrate binding.

The protein belongs to the aspartate/glutamate racemases family.

The catalysed reaction is L-glutamate = D-glutamate. Its pathway is cell wall biogenesis; peptidoglycan biosynthesis. In terms of biological role, provides the (R)-glutamate required for cell wall biosynthesis. This Histophilus somni (strain 129Pt) (Haemophilus somnus) protein is Glutamate racemase.